The chain runs to 95 residues: Large ribosomal subunit protein eL31 (95 aa).

It belongs to the eukaryotic ribosomal protein eL31 family. As to quaternary structure, part of the 50S ribosomal subunit.

In Pyrococcus furiosus (strain ATCC 43587 / DSM 3638 / JCM 8422 / Vc1), this protein is Large ribosomal subunit protein eL31.